The following is a 256-amino-acid chain: Pimeloyl-[acyl-carrier protein] methyl ester esterase (256 aa).

The 228-residue stretch at 15–242 (HLVLLHGWGL…AAHAPFISHP (228 aa)) folds into the AB hydrolase-1 domain. Substrate-binding positions include W22, 82 to 83 (SL), and 143 to 147 (FLALQ). Residue S82 is the Nucleophile of the active site. Catalysis depends on residues D207 and H235. H235 lines the substrate pocket.

It belongs to the AB hydrolase superfamily. Carboxylesterase BioH family. In terms of assembly, monomer.

Its subcellular location is the cytoplasm. It catalyses the reaction 6-carboxyhexanoyl-[ACP] methyl ester + H2O = 6-carboxyhexanoyl-[ACP] + methanol + H(+). It participates in cofactor biosynthesis; biotin biosynthesis. Its function is as follows. The physiological role of BioH is to remove the methyl group introduced by BioC when the pimeloyl moiety is complete. It allows to synthesize pimeloyl-ACP via the fatty acid synthetic pathway through the hydrolysis of the ester bonds of pimeloyl-ACP esters. In Escherichia coli O6:K15:H31 (strain 536 / UPEC), this protein is Pimeloyl-[acyl-carrier protein] methyl ester esterase.